Consider the following 299-residue polypeptide: Bifunctional protein FolD 1 (299 aa).

NADP(+)-binding positions include 168–170 (GRS), Ser193, and Ile234.

Belongs to the tetrahydrofolate dehydrogenase/cyclohydrolase family. As to quaternary structure, homodimer.

The catalysed reaction is (6R)-5,10-methylene-5,6,7,8-tetrahydrofolate + NADP(+) = (6R)-5,10-methenyltetrahydrofolate + NADPH. It carries out the reaction (6R)-5,10-methenyltetrahydrofolate + H2O = (6R)-10-formyltetrahydrofolate + H(+). It participates in one-carbon metabolism; tetrahydrofolate interconversion. Catalyzes the oxidation of 5,10-methylenetetrahydrofolate to 5,10-methenyltetrahydrofolate and then the hydrolysis of 5,10-methenyltetrahydrofolate to 10-formyltetrahydrofolate. This is Bifunctional protein FolD 1 from Mesorhizobium japonicum (strain LMG 29417 / CECT 9101 / MAFF 303099) (Mesorhizobium loti (strain MAFF 303099)).